The sequence spans 181 residues: Dehydration-responsive element-binding protein 1E (181 aa).

The Nuclear localization signal motif lies at 14–26 (KKRAGRRIFKETR). The segment at residues 29–86 (IYRGVRRRDGDKWVCEVREPIHQRRVWLGTYPTADMAARAHDVAVLALRGRSACLNFS) is a DNA-binding region (AP2/ERF).

The protein belongs to the AP2/ERF transcription factor family. ERF subfamily.

The protein resides in the nucleus. In terms of biological role, transcriptional activator that binds specifically to the DNA sequence 5'-[AG]CCGAC-3'. Binding to the C-repeat/DRE element mediates cold or dehydration-inducible transcription. CBF/DREB1 factors play a key role in freezing tolerance and cold acclimation. This is Dehydration-responsive element-binding protein 1E (DREB1E) from Arabidopsis thaliana (Mouse-ear cress).